A 543-amino-acid chain; its full sequence is Zinc finger CCHC domain-containing protein 7 (543 aa).

A disordered region spans residues 51–71 (EEEHEEKNSGNSESSSSKPNQ). A compositionally biased stretch (low complexity) spans 59-68 (SGNSESSSSK). Glycyl lysine isopeptide (Lys-Gly) (interchain with G-Cter in SUMO2) cross-links involve residues Lys-131, Lys-139, Lys-141, Lys-239, and Lys-254. 3 CCHC-type zinc fingers span residues 241 to 258 (IICR…NCPL), 263 to 280 (RRCF…SCPA), and 304 to 321 (KQCD…ACTE). A Glycyl lysine isopeptide (Lys-Gly) (interchain with G-Cter in SUMO2) cross-link involves residue Lys-339. A CCHC-type 4 zinc finger spans residues 348-365 (AYCYHCAQKGHYGHECPE). Residues Lys-412, Lys-417, and Lys-435 each participate in a glycyl lysine isopeptide (Lys-Gly) (interchain with G-Cter in SUMO2) cross-link. The interval 414-543 (PYIKAANENP…FLIKQRKKKS (130 aa)) is disordered. 2 stretches are compositionally biased toward basic and acidic residues: residues 441-457 (QENK…NRNW) and 465-475 (RHREVDEDFPR). Residue Lys-478 forms a Glycyl lysine isopeptide (Lys-Gly) (interchain with G-Cter in SUMO2) linkage. Residues 479–491 (TYSSPGSFKTQKP) are compositionally biased toward polar residues. Phosphoserine occurs at positions 482 and 485. Glycyl lysine isopeptide (Lys-Gly) (interchain with G-Cter in SUMO2) cross-links involve residues Lys-487, Lys-490, and Lys-493. Over residues 493 to 502 (KPFHRSSHYH) the composition is skewed to basic residues. Over residues 503 to 515 (TSREDKSPKEGKR) the composition is skewed to basic and acidic residues. A Glycyl lysine isopeptide (Lys-Gly) (interchain with G-Cter in SUMO2) cross-link involves residue Lys-537.

In terms of assembly, component of a nucleolar TRAMP-like complex, an ATP-dependent exosome regulatory complex consisting of a helicase (MTREX), an oligadenylate polymerase (TENT4B or TENT4A), and a substrate specific RNA-binding factor (ZCCHC7 or ZCCHC8). Several TRAMP-like complexes exist with specific compositions and are associated with nuclear, or nucleolar RNA exosomes.

The protein resides in the nucleus. It is found in the nucleolus. In Homo sapiens (Human), this protein is Zinc finger CCHC domain-containing protein 7 (ZCCHC7).